Consider the following 859-residue polypeptide: ATP-dependent RNA helicase DDX24 (859 aa).

Lys-17 carries the post-translational modification N6-acetyllysine. Position 60 is a phosphoserine (Ser-60). The interval 61-170 (PAKNPSSLFS…KGLEPSQSTA (110 aa)) is disordered. Lys-71 carries the N6-acetyllysine modification. 2 positions are modified to phosphoserine: Ser-82 and Ser-94. Positions 94 to 105 (SPKKKIKLKKSK) are enriched in basic residues. Residues 106 to 115 (NVATEGTSTQ) show a composition bias toward polar residues. Positions 125 to 139 (LEAQGDDMVCDDPEA) are enriched in acidic residues. The Q motif motif lies at 192–220 (SAWKDLFVPRPVLRALSFLGFSAPTPIQA). In terms of domain architecture, Helicase ATP-binding spans 224–528 (APAIRDKLDI…RILHKKHTKK (305 aa)). 237 to 244 (AETGSGKT) contributes to the ATP binding site. The interval 262-300 (NAAPPPSNTEAPPGETRTEAGAETRSPGKAEAESDALPD) is disordered. A compositionally biased stretch (basic and acidic residues) spans 277–293 (TRTEAGAETRSPGKAEA). Phosphoserine occurs at positions 287 and 295. Thr-302 is subject to Phosphothreonine. A disordered region spans residues 326–376 (SDQALLFGDDDAGEGPSSLIREKPVPKQNENEEENLDKEQTGNLKQELDDK). Lys-370 participates in a covalent cross-link: Glycyl lysine isopeptide (Lys-Gly) (interchain with G-Cter in SUMO2). A DEAD box motif is present at residues 471–474 (DEAD). The region spanning 578 to 723 (YLYYFLMQYP…LFPVQTKYMD (146 aa)) is the Helicase C-terminal domain. Glycyl lysine isopeptide (Lys-Gly) (interchain with G-Cter in SUMO2) cross-links involve residues Lys-624, Lys-808, and Lys-825. 2 stretches are compositionally biased toward polar residues: residues 799-814 (PLFT…TQSG) and 823-833 (PSKSESALSCL). The disordered stretch occupies residues 799–859 (PLFTESQKTK…EQPQPSTSAN (61 aa)).

This sequence belongs to the DEAD box helicase family. DDX24/MAK5 subfamily. Interacts with FADD. Interacts with RIPK1; this interaction disrupts RLR signaling activation of IFN-dependent transcription factor IRF7. Interacts with NIP7. Interacts with EP300; this interaction prevents TP53 acetylation mediated by EP300. As to quaternary structure, (Microbial infection) Interacts with HIV-1 virus Gag and Rev proteins. Ubiquitinated by MDM2 without targeting DDX24 for proteasomal degradation. Instead, polyubiquitinated DDX24 promotes interaction with NIP7, a component of pre-rRNP processing complex, and associates with pre-rRNA molecules and pre-ribosomal particles. In terms of tissue distribution, ubiquitous. Most abundant in heart and brain, but with lowest levels in thymus and small intestine.

The protein resides in the cytoplasm. It is found in the nucleus. It catalyses the reaction ATP + H2O = ADP + phosphate + H(+). In terms of biological role, ATP-dependent RNA helicase that plays a role in various aspects of RNA metabolism including pre-mRNA splicing and is thereby involved in different biological processes such as cell cycle regulation or innate immunity. Plays an inhibitory role in TP53 transcriptional activity and subsequently in TP53 controlled cell growth arrest and senescence by inhibiting its EP300 mediated acetylation. Negatively regulates cytosolic RNA-mediated innate immune signaling at least in part by affecting RIPK1/IRF7 interactions. Alternatively, possesses antiviral activity by recognizing gammaherpesvirus transcripts in the context of lytic reactivation. Plays an essential role in cell cycle regulation in vascular smooth muscle cells by interacting with and regulating FANCA (Fanconi anemia complementation group A) mRNA. (Microbial infection) Plays a positive role in HIV-1 infection by promoting Rev-dependent nuclear export of viral RNAs and their packaging into virus particles. The sequence is that of ATP-dependent RNA helicase DDX24 (DDX24) from Homo sapiens (Human).